Here is a 602-residue protein sequence, read N- to C-terminus: Elongation factor 4 (602 aa).

The 182-residue stretch at 7 to 188 (ENIRNFSIIA…SIIRLVPPPK (182 aa)) folds into the tr-type G domain. GTP is bound by residues 19-24 (DHGKST) and 135-138 (NKID).

Belongs to the TRAFAC class translation factor GTPase superfamily. Classic translation factor GTPase family. LepA subfamily.

Its subcellular location is the cell inner membrane. It carries out the reaction GTP + H2O = GDP + phosphate + H(+). Required for accurate and efficient protein synthesis under certain stress conditions. May act as a fidelity factor of the translation reaction, by catalyzing a one-codon backward translocation of tRNAs on improperly translocated ribosomes. Back-translocation proceeds from a post-translocation (POST) complex to a pre-translocation (PRE) complex, thus giving elongation factor G a second chance to translocate the tRNAs correctly. Binds to ribosomes in a GTP-dependent manner. This Chlamydia trachomatis serovar L2 (strain ATCC VR-902B / DSM 19102 / 434/Bu) protein is Elongation factor 4.